The sequence spans 147 residues: Hemoglobin subunit beta-H0 (147 aa).

Positions 3-147 (HFTAEEKAAI…VATALSHKYH (145 aa)) constitute a Globin domain. Heme b-binding residues include His-64 and His-93.

The protein belongs to the globin family. Heterotetramer of two alpha chains and two beta chains. In terms of tissue distribution, red blood cells.

In terms of biological role, this is a minor early embryonic beta chain. This chain is Hemoglobin subunit beta-H0 (Hbb-bh0), found in Mus musculus (Mouse).